A 75-amino-acid polypeptide reads, in one-letter code: Rugosin-LK2 (75 aa).

The N-terminal stretch at 1-24 (MFTMKKSLLFLFFLGTISLSFCEG) is a signal peptide. A propeptide spanning residues 25–40 (ERSADEDDEGEMTEEE) is cleaved from the precursor.

As to expression, expressed by the skin glands.

The protein localises to the secreted. Its function is as follows. Has antimicrobial activity against Gram-positive bacteria S.aureus ATCC 2592 (MIC=10.0 uM), S.aureus ATCC 43300 (MIC=10.0 uM) and B.subtilis (MIC=30.0 uM), against Gram-negative bacteria E.coli ML-35P (MIC=10.0 uM), P.aeruginosa PA01 (MIC=2.5 uM) and P.aeruginosa ATCC 27853 (MIC=2.5 uM) and against fungus C.albicans ATCC 2002 (MIC=10.0 uM). The chain is Rugosin-LK2 from Limnonectes kuhlii (Kuhl's Creek frog).